Reading from the N-terminus, the 245-residue chain is Ribosomal RNA small subunit methyltransferase G (245 aa).

Residues Gly80, Phe85, 103-105 (DAT), 131-132 (AE), and Arg150 contribute to the S-adenosyl-L-methionine site.

The protein belongs to the methyltransferase superfamily. RNA methyltransferase RsmG family.

It localises to the cytoplasm. Functionally, specifically methylates the N7 position of a guanine in 16S rRNA. The protein is Ribosomal RNA small subunit methyltransferase G of Deinococcus geothermalis (strain DSM 11300 / CIP 105573 / AG-3a).